The following is a 426-amino-acid chain: Serine hydroxymethyltransferase (426 aa).

Residues Leu-121 and 125–127 (GHL) each bind (6S)-5,6,7,8-tetrahydrofolate. Residue Lys-230 is modified to N6-(pyridoxal phosphate)lysine. 354 to 356 (SPF) provides a ligand contact to (6S)-5,6,7,8-tetrahydrofolate.

Belongs to the SHMT family. In terms of assembly, homodimer. The cofactor is pyridoxal 5'-phosphate.

The protein resides in the cytoplasm. The catalysed reaction is (6R)-5,10-methylene-5,6,7,8-tetrahydrofolate + glycine + H2O = (6S)-5,6,7,8-tetrahydrofolate + L-serine. Its pathway is one-carbon metabolism; tetrahydrofolate interconversion. It participates in amino-acid biosynthesis; glycine biosynthesis; glycine from L-serine: step 1/1. In terms of biological role, catalyzes the reversible interconversion of serine and glycine with tetrahydrofolate (THF) serving as the one-carbon carrier. This reaction serves as the major source of one-carbon groups required for the biosynthesis of purines, thymidylate, methionine, and other important biomolecules. Also exhibits THF-independent aldolase activity toward beta-hydroxyamino acids, producing glycine and aldehydes, via a retro-aldol mechanism. This chain is Serine hydroxymethyltransferase, found in Gloeobacter violaceus (strain ATCC 29082 / PCC 7421).